The following is a 1026-amino-acid chain: Adenylate-forming reductase 06235 (1026 aa).

Residues 37 to 422 form an adenylation (A) domain region; it reads FEFHAKANPD…LGRIDNQVKI (386 aa). AMP contacts are provided by residues 332–333 and 412–415; these read VT and HLGR. The interval 556–638 is thiolation and peptide carrier (T) domain; the sequence is SLVSTVGSTV…ALFIWILVTK (83 aa). The tract at residues 682–901 is reductase (R) domain; the sequence is CIRRVCARIY…PPTKMWVKGV (220 aa). Residues 685 to 688, 769 to 771, and Tyr-840 each bind NADP(+); these read RVCA and TAL.

The protein belongs to the adenylate-forming reductase family.

Its function is as follows. Adenylate-forming reductase, a natural product biosynthesis enzyme that resembles non-ribosomal peptide synthetases, yet serves to modify one substrate, rather than to condense two or more building blocks. The A-domain preferentially accepts L-serine, L-alanine and L-valine as substrates. The natural product of the enzyme is not yet known. The polypeptide is Adenylate-forming reductase 06235 (Coprinopsis cinerea (strain Okayama-7 / 130 / ATCC MYA-4618 / FGSC 9003) (Inky cap fungus)).